Reading from the N-terminus, the 469-residue chain is C4b-binding protein (469 aa).

Positions 1-56 are cleaved as a signal peptide; the sequence is MCAKQQQTLLPTRAAHGRLHRNRDAVAWPFSTLCRVSGPTLFQMTFTAALWVAVFG. Sushi domains are found at residues 57 to 117, 118 to 178, 179 to 242, 243 to 301, 302 to 357, and 358 to 415; these read KCGP…SCAK, KHCR…ECVI, VKCG…TCEK, IICS…TCEF, DCDL…QCKA, and LCQK…RCEQ. 12 cysteine pairs are disulfide-bonded: C58-C103, C88-C115, C120-C160, C146-C176, C181-C223, C209-C240, C245-C287, C273-C299, C303-C343, C329-C355, C359-C400, and C386-C413. N74 is a glycosylation site (N-linked (GlcNAc...) asparagine). N227, N275, and N292 each carry an N-linked (GlcNAc...) asparagine glycan. N-linked (GlcNAc...) asparagine glycans are attached at residues N366 and N381. The N-linked (GlcNAc...) asparagine glycan is linked to N428.

As to quaternary structure, homoheptamer; not covalently linked. Mouse lacks the beta chain of C4BP.

The protein localises to the secreted. Its function is as follows. Controls the classical pathway of complement activation. It binds as a cofactor to C3b/C4b inactivator (C3bINA), which then hydrolyzes the complement fragment C4b. It also accelerates the degradation of the C4bC2a complex (C3 convertase) by dissociating the complement fragment C2a. Alpha chain binds C4b. It also interacts with serum amyloid P component. The sequence is that of C4b-binding protein (C4bpa) from Mus musculus (Mouse).